A 226-amino-acid polypeptide reads, in one-letter code: Ribose-5-phosphate isomerase A (226 aa).

Residues 26-29 (TGST), 82-85 (DGAD), and 95-98 (KGGG) each bind substrate. Glutamate 104 functions as the Proton acceptor in the catalytic mechanism. A substrate-binding site is contributed by lysine 122.

The protein belongs to the ribose 5-phosphate isomerase family. Homodimer.

It catalyses the reaction aldehydo-D-ribose 5-phosphate = D-ribulose 5-phosphate. The protein operates within carbohydrate degradation; pentose phosphate pathway; D-ribose 5-phosphate from D-ribulose 5-phosphate (non-oxidative stage): step 1/1. Catalyzes the reversible conversion of ribose-5-phosphate to ribulose 5-phosphate. This is Ribose-5-phosphate isomerase A from Streptococcus thermophilus (strain ATCC BAA-250 / LMG 18311).